Consider the following 122-residue polypeptide: Protein GL2-INTERACTING REPRESSOR 1 (122 aa).

Over residues 1-10 (MSRRSPKLEL) the composition is skewed to basic and acidic residues. The interval 1 to 62 (MSRRSPKLEL…PSVRYSTSPE (62 aa)) is disordered. The EAR signature appears at 7–12 (KLELKL). Residues 27 to 46 (SPSRSATTSPTSPPSSCVSS) show a composition bias toward low complexity. Positions 47–62 (EMNQDEPSVRYSTSPE) are enriched in polar residues.

Interacts with GL2. Interacts with TPL. Expressed in root and shoot meristems.

It localises to the nucleus. Functionally, acts as a negative regulator of root hair development redundantly with GIR2. GIR1 and GIR2 may function as adapter proteins that associate with GL2 and participate in the control of root hair formation. GIR1 and GIR2 may function as adapter proteins that associate with TPL and participate in the repression of root gene expression. This Arabidopsis thaliana (Mouse-ear cress) protein is Protein GL2-INTERACTING REPRESSOR 1.